The primary structure comprises 120 residues: Host cell factor C1 regulator 1 (120 aa).

Residues 1-30 are disordered; the sequence is MILQQPLERGPPSRDPRATTGVTRGLNASL. A compositionally biased stretch (polar residues) spans 20-30; that stretch reads TGVTRGLNASL. An interaction with HCFC1 region spans residues 58-61; that stretch reads DHPY. A Nuclear export signal motif is present at residues 92 to 101; that stretch reads IPEALRLLRL.

In terms of assembly, interacts with HCFC1.

Its subcellular location is the cytoplasm. The protein localises to the nucleus. Regulates HCFC1 activity by modulating its subcellular localization. Overexpression of HCFC1R1 leads to accumulation of HCFC1 in the cytoplasm. HCFC1R1-mediated export may provide the pool of cytoplasmic HCFC1 required for import of virion-derived VP16 into the nucleus. The chain is Host cell factor C1 regulator 1 (Hcfc1r1) from Mus musculus (Mouse).